The following is a 588-amino-acid chain: Sulfite reductase [NADPH] hemoprotein beta-component (588 aa).

[4Fe-4S] cluster is bound by residues Cys442, Cys448, Cys487, and Cys491. Cys491 provides a ligand contact to siroheme.

This sequence belongs to the nitrite and sulfite reductase 4Fe-4S domain family. As to quaternary structure, alpha(8)-beta(8). The alpha component is a flavoprotein, the beta component is a hemoprotein. Siroheme is required as a cofactor. [4Fe-4S] cluster serves as cofactor.

The enzyme catalyses hydrogen sulfide + 3 NADP(+) + 3 H2O = sulfite + 3 NADPH + 4 H(+). Its pathway is sulfur metabolism; hydrogen sulfide biosynthesis; hydrogen sulfide from sulfite (NADPH route): step 1/1. Component of the sulfite reductase complex that catalyzes the 6-electron reduction of sulfite to sulfide. This is one of several activities required for the biosynthesis of L-cysteine from sulfate. This chain is Sulfite reductase [NADPH] hemoprotein beta-component, found in Actinobacillus pleuropneumoniae serotype 5b (strain L20).